An 89-amino-acid chain; its full sequence is Cell division topological specificity factor (89 aa).

This sequence belongs to the MinE family.

Its function is as follows. Prevents the cell division inhibition by proteins MinC and MinD at internal division sites while permitting inhibition at polar sites. This ensures cell division at the proper site by restricting the formation of a division septum at the midpoint of the long axis of the cell. In Brucella anthropi (strain ATCC 49188 / DSM 6882 / CCUG 24695 / JCM 21032 / LMG 3331 / NBRC 15819 / NCTC 12168 / Alc 37) (Ochrobactrum anthropi), this protein is Cell division topological specificity factor.